Here is a 130-residue protein sequence, read N- to C-terminus: MLRRTVSNFAMSPYMLFISDLAKTGKLKGIRTPGKFVGKKYRQLSAKEKAALQQRAKQASTPAMTAYRRMAHREMSNKSVPIEQRRANLTKKWNETKQAQRAKAQKAQKKPKSAKSKVKKAAKKAKKSKK.

Residues 1–10 (MLRRTVSNFA) constitute a propeptide that is removed on maturation. The segment at 95–130 (ETKQAQRAKAQKAQKKPKSAKSKVKKAAKKAKKSKK) is disordered. The segment covering 103–130 (KAQKAQKKPKSAKSKVKKAAKKAKKSKK) has biased composition (basic residues).

This sequence belongs to the KAP family. In terms of assembly, associates with the kinetoplast DNA network.

It localises to the mitochondrion matrix. It is found in the kinetoplast. Its function is as follows. Histone H1-like DNA-binding protein involved in the organization and segregation of kinetoplast DNA (kDNA). The mitochondrial DNA of kinetoplastid protozoa consists of about 5,000 minicircles and 20 to 30 maxicircles. These circular DNAs are held together by catenation into a highly organized compact disk structure referred to as a kinetoplast DNA (kDNA) network. Binds preferentially to a specific fragment of minicircle DNA and is able to compact kDNA networks through DNA charge neutralization and condensation. The chain is kinetoplast-associated protein 2-2 (KAP2-2) from Crithidia fasciculata.